We begin with the raw amino-acid sequence, 359 residues long: Phospho-N-acetylmuramoyl-pentapeptide-transferase (359 aa).

The next 10 helical transmembrane spans lie at G27 to L47, T70 to A90, V97 to A117, L133 to E153, V167 to A187, G198 to V218, L238 to P258, A261 to V281, I287 to V307, and Q336 to L356.

It belongs to the glycosyltransferase 4 family. MraY subfamily. It depends on Mg(2+) as a cofactor.

It localises to the cell inner membrane. It catalyses the reaction UDP-N-acetyl-alpha-D-muramoyl-L-alanyl-gamma-D-glutamyl-meso-2,6-diaminopimeloyl-D-alanyl-D-alanine + di-trans,octa-cis-undecaprenyl phosphate = di-trans,octa-cis-undecaprenyl diphospho-N-acetyl-alpha-D-muramoyl-L-alanyl-D-glutamyl-meso-2,6-diaminopimeloyl-D-alanyl-D-alanine + UMP. It participates in cell wall biogenesis; peptidoglycan biosynthesis. In terms of biological role, catalyzes the initial step of the lipid cycle reactions in the biosynthesis of the cell wall peptidoglycan: transfers peptidoglycan precursor phospho-MurNAc-pentapeptide from UDP-MurNAc-pentapeptide onto the lipid carrier undecaprenyl phosphate, yielding undecaprenyl-pyrophosphoryl-MurNAc-pentapeptide, known as lipid I. This chain is Phospho-N-acetylmuramoyl-pentapeptide-transferase, found in Jannaschia sp. (strain CCS1).